The sequence spans 100 residues: NADH-quinone oxidoreductase subunit K (100 aa).

3 helical membrane-spanning segments follow: residues 4-24 (LQHGLILAAILFILGLTGLVI), 28-48 (LLFMLIGLEIMINASALAFVV), and 60-80 (VMYILAISLAAAEASIGLALL).

It belongs to the complex I subunit 4L family. In terms of assembly, NDH-1 is composed of 13 different subunits. Subunits NuoA, H, J, K, L, M, N constitute the membrane sector of the complex.

Its subcellular location is the cell inner membrane. It catalyses the reaction a quinone + NADH + 5 H(+)(in) = a quinol + NAD(+) + 4 H(+)(out). NDH-1 shuttles electrons from NADH, via FMN and iron-sulfur (Fe-S) centers, to quinones in the respiratory chain. The immediate electron acceptor for the enzyme in this species is believed to be ubiquinone. Couples the redox reaction to proton translocation (for every two electrons transferred, four hydrogen ions are translocated across the cytoplasmic membrane), and thus conserves the redox energy in a proton gradient. The protein is NADH-quinone oxidoreductase subunit K of Shigella sonnei (strain Ss046).